Here is a 113-residue protein sequence, read N- to C-terminus: MTSIIFSAKDIFEQEFGREVRGYSKVEVDEFLDDVIKDYETYATLVKSLRQEIADLKEELTRKPQVSSAPSPSHPDPIDVAASSSMTNFDILKRLNRLEKEVFGKQILDNTDL.

Residues 37 to 63 are a coiled coil; it reads KDYETYATLVKSLRQEIADLKEELTRK. The segment at 61 to 82 is disordered; sequence TRKPQVSSAPSPSHPDPIDVAA.

This sequence belongs to the GpsB family. Forms polymers through the coiled coil domains. Interacts with PBP1, MreC and EzrA.

It localises to the cytoplasm. Its function is as follows. Divisome component that associates with the complex late in its assembly, after the Z-ring is formed, and is dependent on DivIC and PBP2B for its recruitment to the divisome. Together with EzrA, is a key component of the system that regulates PBP1 localization during cell cycle progression. Its main role could be the removal of PBP1 from the cell pole after pole maturation is completed. Also contributes to the recruitment of PBP1 to the division complex. Not essential for septum formation. The chain is Cell cycle protein GpsB from Streptococcus pneumoniae (strain ATCC 700669 / Spain 23F-1).